A 96-amino-acid polypeptide reads, in one-letter code: MEQAPEDQGPQREPYNQWALELLEELKNEAVRHFPRIWLHGLGQHIYETYGDTWAGVEAIIRILQQLLFIHFRIGCRHSRIGIIRQRRARNGASRS.

A homooligomerization region spans residues 1–42; it reads MEQAPEDQGPQREPYNQWALELLEELKNEAVRHFPRIWLHGL. 3 positions are modified to phosphoserine; by host: Ser-79, Ser-94, and Ser-96.

This sequence belongs to the HIV-1 VPR protein family. As to quaternary structure, homooligomer, may form homodimer. Interacts with p6-gag region of the Pr55 Gag precursor protein through a (Leu-X-X)4 motif near the C-terminus of the P6gag protein. Interacts with host UNG. May interact with host RAD23A/HHR23A. Interacts with host VPRBP/DCAF1, leading to hijack the CUL4A-RBX1-DDB1-DCAF1/VPRBP complex, mediating ubiquitination of host proteins such as TERT and ZGPAT and arrest of the cell cycle in G2 phase. In terms of processing, phosphorylated on several residues by host. These phosphorylations regulate VPR activity for the nuclear import of the HIV-1 pre-integration complex.

It is found in the virion. The protein localises to the host nucleus. The protein resides in the host extracellular space. In terms of biological role, during virus replication, may deplete host UNG protein, and incude G2-M cell cycle arrest. Acts by targeting specific host proteins for degradation by the 26S proteasome, through association with the cellular CUL4A-DDB1 E3 ligase complex by direct interaction with host VPRPB/DCAF-1. Cell cycle arrest reportedly occurs within hours of infection and is not blocked by antiviral agents, suggesting that it is initiated by the VPR carried into the virion. Additionally, VPR induces apoptosis in a cell cycle dependent manner suggesting that these two effects are mechanistically linked. Detected in the serum and cerebrospinal fluid of AIDS patient, VPR may also induce cell death to bystander cells. Functionally, during virus entry, plays a role in the transport of the viral pre-integration (PIC) complex to the host nucleus. This function is crucial for viral infection of non-dividing macrophages. May act directly at the nuclear pore complex, by binding nucleoporins phenylalanine-glycine (FG)-repeat regions. This Human immunodeficiency virus type 1 group M subtype B (isolate MN) (HIV-1) protein is Protein Vpr.